The primary structure comprises 243 residues: Adenylate dimethylallyltransferase (243 aa).

It carries out the reaction dimethylallyl diphosphate + AMP = N(6)-(dimethylallyl)adenosine 5'-phosphate + diphosphate. Transfers dimethylallyl groups to AMP as part of the biosynthesis of cytokinin phytohormones. The polypeptide is Adenylate dimethylallyltransferase (tzs) (Agrobacterium fabrum (strain C58 / ATCC 33970) (Agrobacterium tumefaciens (strain C58))).